We begin with the raw amino-acid sequence, 152 residues long: ESAT-6 secretion machinery protein EssA (152 aa).

The Cytoplasmic portion of the chain corresponds to Met1–Lys114. Residues Ile115 to Ser135 traverse the membrane as a helical segment. The Extracellular portion of the chain corresponds to Ile136–Ile152.

The protein belongs to the EssA family.

The protein resides in the cell membrane. In terms of biological role, component of the ESAT-6 secretion system (Ess). Required for the secretion of EsxA. The polypeptide is ESAT-6 secretion machinery protein EssA (Staphylococcus aureus (strain MRSA252)).